We begin with the raw amino-acid sequence, 89 residues long: uncharacterized protein (89 aa).

The protein to Rhizobium NGR234A y4oN.

This is an uncharacterized protein from Sinorhizobium fredii (strain NBRC 101917 / NGR234).